The following is a 145-amino-acid chain: 3-hydroxyacyl-[acyl-carrier-protein] dehydratase FabZ (145 aa).

H47 is a catalytic residue.

The protein belongs to the thioester dehydratase family. FabZ subfamily.

The protein resides in the cytoplasm. It carries out the reaction a (3R)-hydroxyacyl-[ACP] = a (2E)-enoyl-[ACP] + H2O. Functionally, involved in unsaturated fatty acids biosynthesis. Catalyzes the dehydration of short chain beta-hydroxyacyl-ACPs and long chain saturated and unsaturated beta-hydroxyacyl-ACPs. The polypeptide is 3-hydroxyacyl-[acyl-carrier-protein] dehydratase FabZ (Thiobacillus denitrificans (strain ATCC 25259 / T1)).